Reading from the N-terminus, the 241-residue chain is Chloride intracellular channel protein 1 (241 aa).

A2 carries the N-acetylalanine modification. The tract at residues 2–90 is required for insertion into the membrane; sequence AEEQPQVELF…EEFLEAVLCP (89 aa). Residue K13 is modified to N6-acetyllysine. Residues 24–27 carry the G-site motif; that stretch reads CPFS. C24 and C59 are disulfide-bonded. The helical transmembrane segment at 26 to 46 threads the bilayer; that stretch reads FSQRLFMVLWLKGVTFNVTTV. In terms of domain architecture, GST C-terminal spans 93-233; it reads YPKLAALNPE…PDDEEIELAY (141 aa). Residue K119 is modified to N6-acetyllysine. S121 is modified (phosphoserine). Residue K131 is modified to N6-acetyllysine. Phosphoserine is present on residues S156 and S211. Y233 carries the post-translational modification Phosphotyrosine.

This sequence belongs to the chloride channel CLIC family. Monomer. Homodimer (in vitro). Interacts with TRAPPC2. Dimerization requires a conformation change that leads to the exposure of a large hydrophobic surface. In vivo, this may lead to membrane insertion.

It is found in the nucleus. It localises to the nucleus membrane. Its subcellular location is the cytoplasm. The protein localises to the cell membrane. The protein resides in the endoplasmic reticulum. The catalysed reaction is L-dehydroascorbate + 2 glutathione = glutathione disulfide + L-ascorbate. It catalyses the reaction chloride(in) = chloride(out). The enzyme catalyses iodide(out) = iodide(in). It carries out the reaction thiocyanate(in) = thiocyanate(out). The catalysed reaction is nitrate(in) = nitrate(out). It catalyses the reaction bromide(in) = bromide(out). The enzyme catalyses fluoride(in) = fluoride(out). In the soluble state, catalyzes glutaredoxin-like thiol disulfide exchange reactions with reduced glutathione as electron donor. Reduces selenite and dehydroascorbate and may act as an antioxidant during oxidative stress response. Can insert into membranes and form voltage-dependent multi-ion conductive channels. Membrane insertion seems to be redox-regulated and may occur only under oxidizing conditions. Involved in regulation of the cell cycle. This chain is Chloride intracellular channel protein 1 (CLIC1), found in Oryctolagus cuniculus (Rabbit).